The following is a 388-amino-acid chain: Cuticle-degrading protease (388 aa).

A signal peptide spans 1–18 (MHLSALLTLLPAVLAAPA). The propeptide occupies 19–107 (TIGRRAEPAP…IEKDAVMRIS (89 aa)). The region spanning 41–106 (KYIVKFKDDI…FIEKDAVMRI (66 aa)) is the Inhibitor I9 domain. Positions 116 to 388 (PWGLGRISHR…TVNYLAYNGA (273 aa)) constitute a Peptidase S8 domain. Intrachain disulfides connect Cys-143–Cys-233 and Cys-288–Cys-360. Residues Asp-148 and His-179 each act as charge relay system in the active site. Asn-296 carries an N-linked (GlcNAc...) asparagine glycan. Ser-334 acts as the Charge relay system in catalysis.

The protein belongs to the peptidase S8 family.

Its subcellular location is the secreted. Its function is as follows. Capable of breaching the insect cuticle. This chain is Cuticle-degrading protease (PR1), found in Metarhizium anisopliae (Entomophthora anisopliae).